A 602-amino-acid polypeptide reads, in one-letter code: Elongation factor 4 (602 aa).

The 183-residue stretch at 7-189 (KFIRNFSIIA…QLVVAIPPPV (183 aa)) folds into the tr-type G domain. GTP-binding positions include 19–24 (DHGKST) and 136–139 (NKID).

The protein belongs to the TRAFAC class translation factor GTPase superfamily. Classic translation factor GTPase family. LepA subfamily.

It localises to the cell inner membrane. It carries out the reaction GTP + H2O = GDP + phosphate + H(+). Its function is as follows. Required for accurate and efficient protein synthesis under certain stress conditions. May act as a fidelity factor of the translation reaction, by catalyzing a one-codon backward translocation of tRNAs on improperly translocated ribosomes. Back-translocation proceeds from a post-translocation (POST) complex to a pre-translocation (PRE) complex, thus giving elongation factor G a second chance to translocate the tRNAs correctly. Binds to ribosomes in a GTP-dependent manner. The protein is Elongation factor 4 of Coxiella burnetii (strain Dugway 5J108-111).